The chain runs to 469 residues: Glutamate--tRNA ligase (469 aa).

Residues 11–21 (PSPTGFIHLGN) carry the 'HIGH' region motif. The span at 118–131 (GEKPRYDGTWRPEP) shows a compositional bias: basic and acidic residues. The segment at 118-139 (GEKPRYDGTWRPEPGKVLPEPP) is disordered. The 'KMSKS' region motif lies at 243 to 247 (KMSKR). K246 contributes to the ATP binding site.

The protein belongs to the class-I aminoacyl-tRNA synthetase family. Glutamate--tRNA ligase type 1 subfamily. Monomer.

The protein localises to the cytoplasm. The catalysed reaction is tRNA(Glu) + L-glutamate + ATP = L-glutamyl-tRNA(Glu) + AMP + diphosphate. Its function is as follows. Catalyzes the attachment of glutamate to tRNA(Glu) in a two-step reaction: glutamate is first activated by ATP to form Glu-AMP and then transferred to the acceptor end of tRNA(Glu). In Burkholderia mallei (strain NCTC 10247), this protein is Glutamate--tRNA ligase.